The primary structure comprises 101 residues: uncharacterized protein (101 aa).

A signal peptide spans 1-23; it reads MERRTGVVLIIFVTFCEAMMARA. A helical transmembrane segment spans residues 38–58; the sequence is FLLFIIHTSCTMVAFIIGNLA.

The protein localises to the host membrane. This is an uncharacterized protein from Cryphonectria parasitica (Chestnut blight fungus).